Reading from the N-terminus, the 73-residue chain is MHKTFYTFLMTQRNPDSTDAIAEFANNAFLDQSFPKQSKDFHELSQYLELNAGYLPTMTVFDDAWQAYLASEA.

The protein belongs to the UPF0346 family.

The protein is UPF0346 protein lp_1865 of Lactiplantibacillus plantarum (strain ATCC BAA-793 / NCIMB 8826 / WCFS1) (Lactobacillus plantarum).